The sequence spans 287 residues: ATP synthase gamma chain (287 aa).

The protein belongs to the ATPase gamma chain family. As to quaternary structure, F-type ATPases have 2 components, CF(1) - the catalytic core - and CF(0) - the membrane proton channel. CF(1) has five subunits: alpha(3), beta(3), gamma(1), delta(1), epsilon(1). CF(0) has three main subunits: a, b and c.

Its subcellular location is the cell inner membrane. In terms of biological role, produces ATP from ADP in the presence of a proton gradient across the membrane. The gamma chain is believed to be important in regulating ATPase activity and the flow of protons through the CF(0) complex. In Escherichia fergusonii (strain ATCC 35469 / DSM 13698 / CCUG 18766 / IAM 14443 / JCM 21226 / LMG 7866 / NBRC 102419 / NCTC 12128 / CDC 0568-73), this protein is ATP synthase gamma chain.